A 181-amino-acid chain; its full sequence is MKQLLDFLPLIIFFAVYKFFDIYIASGALIAATALQLVVTYALYKKLEKMHLITFAMVTVFGTLTLVFHDDAFIKWKVTIIYALFALALGVSQLLNKSILKSMLGKEMKVADKIWAHVTWYWVSFFAICGLVNIYVAFKLPLETWVNFKVFGLTALTLINTVITVFYLYKHLPEDQRKELK.

A run of 5 helical transmembrane segments spans residues 10–30 (LIIF…GALI), 50–70 (MHLI…VFHD), 72–92 (AFIK…LGVS), 118–138 (VTWY…YVAF), and 148–168 (FKVF…VFYL).

It belongs to the YciB family.

It localises to the cell inner membrane. Plays a role in cell envelope biogenesis, maintenance of cell envelope integrity and membrane homeostasis. This Shewanella sp. (strain MR-4) protein is Inner membrane-spanning protein YciB.